A 325-amino-acid chain; its full sequence is Cytosolic Fe-S cluster assembly factor Nubp1 homolog (325 aa).

The segment at 1-26 (MSSGADVPSDAPAHCPGTQSDDAGKA) is disordered. Cys-15, Cys-29, Cys-32, and Cys-38 together coordinate [4Fe-4S] cluster. 68 to 75 (GKGGVGKS) is an ATP binding site. [4Fe-4S] cluster is bound by residues Cys-243 and Cys-246.

Belongs to the Mrp/NBP35 ATP-binding proteins family. NUBP1/NBP35 subfamily. Heterotetramer of 2 Nubp1 and 2 Nubp2 chains. The cofactor is [4Fe-4S] cluster.

The protein resides in the cytoplasm. Component of the cytosolic iron-sulfur (Fe/S) protein assembly (CIA) machinery. Required for maturation of extramitochondrial Fe-S proteins. The Nubp1-Nubp2 heterotetramer forms a Fe-S scaffold complex, mediating the de novo assembly of an Fe-S cluster and its transfer to target apoproteins. The sequence is that of Cytosolic Fe-S cluster assembly factor Nubp1 homolog from Anopheles gambiae (African malaria mosquito).